Here is an 88-residue protein sequence, read N- to C-terminus: Hemotin (88 aa).

Residues 1–14 are Lumenal-facing; it reads MDCFKVFEVVFQSE. A helical transmembrane segment spans residues 15–37; the sequence is INPLLLIPAVATIALTLCCYCYH. The Cytoplasmic segment spans residues 38 to 88; the sequence is GYQWIRDRRTARIEEQQAQLPLPLSRISITPGCSMVATTKLTHSRNSVDIY.

As to quaternary structure, interacts with 14-3-3zeta. In terms of tissue distribution, expressed in hemocytes.

The protein localises to the early endosome membrane. Negatively regulates early endosome maturation by binding to and repressing the activity of 14-3-3zeta which prevents the 14-3-3zeta-mediated activation of phosphoinositide 3-kinase Pi3K68D. This, in turn, inhibits the Pi3K68D-mediated conversion of phosphatidylinositol to phosphatidylinositol-3-phosphate and prevents progression of early endosomes through the maturation process which regulates subsequent steps of phagocytic processing. The protein is Hemotin of Drosophila melanogaster (Fruit fly).